The sequence spans 218 residues: Peptidase E (218 aa).

Residues S123, D138, and H160 each act as charge relay system in the active site.

It belongs to the peptidase S51 family.

The protein localises to the cytoplasm. The enzyme catalyses Dipeptidase E catalyzes the hydrolysis of dipeptides Asp-|-Xaa. It does not act on peptides with N-terminal Glu, Asn or Gln, nor does it cleave isoaspartyl peptides.. Its function is as follows. Hydrolyzes dipeptides containing N-terminal aspartate residues. May play a role in allowing the cell to use peptide aspartate to spare carbon otherwise required for the synthesis of the aspartate family of amino acids. This chain is Peptidase E, found in Haemophilus influenzae (strain ATCC 51907 / DSM 11121 / KW20 / Rd).